Reading from the N-terminus, the 579-residue chain is Zinc finger protein 382 (579 aa).

Over residues 1-12 the composition is skewed to basic residues; sequence MGRPGRKPRGRA. Residues 1–37 form a disordered region; the sequence is MGRPGRKPRGRARPGLFPFPKEELRQGGSSPANLNAM. Residues 12–135 are mediates interaction with TRIM28; it reads ARPGLFPFPK…DKPPKSIVII (124 aa). Positions 27-36 are enriched in polar residues; it reads GGSSPANLNA. Represses transcription regions lie at residues 40–81 and 105–240; these read GPVS…FISV and IFPS…PEQR. One can recognise a KRAB domain in the interval 42 to 113; that stretch reads VSFKDVTVDF…RIFPSQSYLE (72 aa). The C2H2-type 1; degenerate zinc finger occupies 241 to 263; sequence FEYNKCDSSFLMTGVEFPHGRAH. 9 C2H2-type zinc fingers span residues 325-347, 353-375, 381-403, 409-431, 437-459, 465-487, 493-515, 521-543, and 549-571; these read FQCPYCGNSFRRKSYLIEHERIH, YICCQCGRAFRQKTALTLHEKTH, YLCVDCGKSFRQKATLTRHHKAH, YECTQCGSAFGKKSYLIDHQRTH, YQCTECGKAFIQKTTLTVHQRTH, YICSECGKSFCQKTTLTLHQRIH, YICSDCGKSFRQKAILTVHYRIH, NGCPQCGKAFSRKSNLIRHQKIH, and YECQECGKFFSCKSNLITHQKTH. Residues 325–579 form a required for transcriptional repression activity; probably mediates sequence-specific DNA-binding region; the sequence is FQCPYCGNSF…THKTETMRFQ (255 aa).

Belongs to the krueppel C2H2-type zinc-finger protein family. In terms of assembly, interacts with TRIM28; enhances the transcriptional repressor activity.

The protein resides in the nucleus. Functions as a sequence-specific transcriptional repressor. In Mus musculus (Mouse), this protein is Zinc finger protein 382 (Znf382).